Reading from the N-terminus, the 562-residue chain is F-box and WD repeat domain-containing 11-A (562 aa).

A homodimerization domain D region spans residues Gly87–Gln136. The F-box domain maps to Asp149–Leu187. WD repeat units lie at residues Arg256–Val295, Leu296–Thr335, Leu336–Leu375, Leu379–Thr418, Leu419–Val458, Leu459–Gln491, and Leu508–Asp538.

In terms of assembly, self-associates. Component of the SCF(FBXW11) complex.

It is found in the cytoplasm. Its subcellular location is the nucleus. It participates in protein modification; protein ubiquitination. Substrate recognition component of a SCF (SKP1-CUL1-F-box protein) E3 ubiquitin-protein ligase complex which mediates the ubiquitination and subsequent proteasomal degradation of target proteins. Probably recognizes and binds to phosphorylated target proteins: the interaction with substrates requires the phosphorylation of the two serine residues in the substrates' destruction motif D-S-G-X(2,3,4)-S. SCF(FBXW11) mediates the ubiquitination of phosphorylated CTNNB1 and participates in Wnt signaling regulation. Participates in Wnt signaling regulation, and plays a role in eye and jaw development. SCF(FBXW11) plays a key role in NF-kappa-B activation by mediating ubiquitination of phosphorylated NFKBIA, leading to its degradation by the proteasome, thereby allowing the associated NF-kappa-B complex to translocate into the nucleus and to activate transcription. In Danio rerio (Zebrafish), this protein is F-box and WD repeat domain-containing 11-A.